Consider the following 256-residue polypeptide: Thiazole synthase (256 aa).

The active-site Schiff-base intermediate with DXP is Lys-96. 1-deoxy-D-xylulose 5-phosphate is bound by residues Gly-157, 184-185 (AG), and 206-207 (NT).

Belongs to the ThiG family. Homotetramer. Forms heterodimers with either ThiH or ThiS.

Its subcellular location is the cytoplasm. It catalyses the reaction [ThiS sulfur-carrier protein]-C-terminal-Gly-aminoethanethioate + 2-iminoacetate + 1-deoxy-D-xylulose 5-phosphate = [ThiS sulfur-carrier protein]-C-terminal Gly-Gly + 2-[(2R,5Z)-2-carboxy-4-methylthiazol-5(2H)-ylidene]ethyl phosphate + 2 H2O + H(+). It participates in cofactor biosynthesis; thiamine diphosphate biosynthesis. Functionally, catalyzes the rearrangement of 1-deoxy-D-xylulose 5-phosphate (DXP) to produce the thiazole phosphate moiety of thiamine. Sulfur is provided by the thiocarboxylate moiety of the carrier protein ThiS. In vitro, sulfur can be provided by H(2)S. The protein is Thiazole synthase of Bartonella tribocorum (strain CIP 105476 / IBS 506).